Reading from the N-terminus, the 177-residue chain is MVAIKNLVLVALTAVTALAVPSPLEARAVTWTCLNDQKNPKTNKYETKRLLYNQNKAESNSHHAPLSDGKTGSSYPHWFTNGYDGDGKLPKGRTPIKFGKSDCDRPPKHSKDGNGKTDHYLLEFPTFPDGHDYKFDSKKPKENPGPARVIYTYPNKVFCGIIAHTKENQGELKLCSH.

An N-terminal signal peptide occupies residues 1–27 (MVAIKNLVLVALTAVTALAVPSPLEAR). Cystine bridges form between C33-C175 and C103-C159. Residue H77 is part of the active site. A disordered region spans residues 86 to 119 (DGKLPKGRTPIKFGKSDCDRPPKHSKDGNGKTDH). Residues 99-119 (GKSDCDRPPKHSKDGNGKTDH) are compositionally biased toward basic and acidic residues. E123 (proton acceptor) is an active-site residue. Catalysis depends on H164, which acts as the Proton donor.

Belongs to the ribonuclease U2 family.

It is found in the secreted. It catalyses the reaction a 28S rRNA containing guanosine-adenosine pair + H2O = an [RNA fragment]-3'-adenosine-3'-phosphate + a 5'-a hydroxy-guanosine-3'-[RNA fragment].. Alpha-sarcin is specific for purines in both single- and double-stranded RNA. Its toxic action on eukaryotic cells is the result of cleavage of a single phosphodiester bond in the 60S subunit of ribosomes. Inhibits both the EFl (elongation factor 1)-dependent binding of aminoacyl-tRNA and the GTP-dependent binding of EF2 (elongation factor 2) to ribosomes. In Aspergillus giganteus, this protein is Ribonuclease alpha-sarcin (sar).